The following is a 388-amino-acid chain: Glycoprotein-N-acetylgalactosamine 3-beta-galactosyltransferase 1 (388 aa).

Over 1 to 12 (MAPISHYIGKTS) the chain is Cytoplasmic. The helical; Signal-anchor for type II membrane protein transmembrane segment at 13–30 (LTTLAIGIAIGITVSNIV) threads the bilayer. Residues 31–388 (KFSSTQRRHF…LAQTDSKHIS (358 aa)) are Lumenal-facing. The segment at 43–65 (SGYIPDSPHSHGENDFVEGPDDS) is disordered. An N-linked (GlcNAc...) asparagine glycan is attached at Asn80. Residues Cys95 and Cys119 are joined by a disulfide bond. UDP-binding residues include Met98, Asn100, Glu142, Gly143, Arg144, Lys150, and Asp173. Mn(2+) contacts are provided by Asp173 and Asp175. A disulfide bond links Cys238 and Cys253. Trp292 provides a ligand contact to a glycoprotein. A disulfide bridge connects residues Cys307 and Cys308. UDP-binding residues include His316 and Tyr317. His316 contacts Mn(2+). The tract at residues 344-388 (STEEQDHGSSHKDTDAMKPEGKGMEDKEDEETNISLAQTDSKHIS) is disordered. Over residues 347–368 (EQDHGSSHKDTDAMKPEGKGME) the composition is skewed to basic and acidic residues. Asn376 carries an N-linked (GlcNAc...) asparagine glycan.

Belongs to the glycosyltransferase 31 family. Beta3-Gal-T subfamily. Homodimer; disulfide-linked. Requires Mn(2+) as cofactor.

It localises to the membrane. The enzyme catalyses an N-acetyl-alpha-D-galactosaminyl derivative + UDP-alpha-D-galactose = a beta-D-galactosyl-(1-&gt;3)-N-acetyl-alpha-D-galactosaminyl derivative + UDP + H(+). It functions in the pathway protein modification; protein glycosylation. Glycosyltransferase that generates the core 1 O-glycan Gal-beta1-3GalNAc-alpha1-Ser/Thr (T antigen), which is a precursor for many extended O-glycans in glycoproteins. In Biomphalaria glabrata (Bloodfluke planorb), this protein is Glycoprotein-N-acetylgalactosamine 3-beta-galactosyltransferase 1.